The chain runs to 475 residues: Gelsolin-like protein 1 (475 aa).

The tract at residues 1 to 131 is actin binding, actin severing, Ca-sensitive; that stretch reads MGGTSLDPAL…GYRHVDDQFK (131 aa). The interval 1-239 is necessary for barbed end capping activity; sequence MGGTSLDPAL…VRKVSKGKDD (239 aa). Residues 27-105 form a Gelsolin-like 1 repeat; sequence FVLEPVPEVD…IQNYESPLFL (79 aa). An actin-actin interfilament contact point region spans residues 70–73; that stretch reads DEIG. The required for synapse elimination during development stretch occupies residues 106–147; it reads SYFPDGIRYVSGGYESGYRHVDDQFKNWKPHLFHCKGKRNVR. A required for phosphatidylinositol 4,5-bisphosphate binding and regulation region spans residues 133–227; the sequence is WKPHLFHCKG…STFWSYFGGV (95 aa). 3 Gelsolin-like repeats span residues 148 to 208, 275 to 341, and 375 to 447; these read CTEV…KVHI, RKEQ…STQF, and EIAN…PPTF. Residues 240 to 475 form an F- and G-actin binding, Ca-independent region; sequence DDNYWKRLTE…VQNMRRLLFH (236 aa). Residues 248 to 348 are inhibitory for phosphatidylinositol 4,5-bisphosphate binding activity; that stretch reads TEQITLWKVS…TQFTQWFRDW (101 aa).

It belongs to the villin/gelsolin family. Monomer. Binds to actin monomers and filaments. Cleavage by caspase ced-3 activates its actin-severing function and is required for the elimination of presynaptic components during development.

The protein resides in the cytoplasm. Its subcellular location is the cytoskeleton. Functionally, calcium-regulated, actin-modulating protein that binds to the plus (or barbed) ends of actin monomers or filaments, preventing monomer exchange (end-blocking or capping). Binds actin but does not nucleate actin polymerization, albeit slows down elongation by blocking the barbed ends. By promoting actin depolymerization, required for the elimination of presynaptic components downstream of the egl-1, ced-4 and ced-3 apoptotic pathway during larval development. The polypeptide is Gelsolin-like protein 1 (Caenorhabditis elegans).